Reading from the N-terminus, the 428-residue chain is MQVRNKDDILICEAIENYDSESLRNILENGADPNVRVPYQYSHLHNAIEKKNGSAVSLLLKHGADPNISGFFTPPLHKAIKKGCVDIARSLLEYGAIVNLEHYCLKPIHIAANRTESKIVKLLIEYGADINSEDGANGKYPIHYAMKVYDPFRLKIIKVLLDHGADINKQSVLTNTSPLYETRFITDDLLDYIISRGANINIKGRMGRNILHEIILRNGYNDFSNILVLIDHGADINALDDEGNTPFMLHTINNNAIILANYIVSLYYLSYKARISNGMEKNMKIINKCEYLSSCINIIKEEIERMKTFKIYDGNSFQDLSLFDLLSNEDNIAIVYRLSDTLLEKMNIIKTIFPNCFRIIQNILKMLTKRYEMLLEINNIMNANLVNTKWYTLPIEIRWMILTKLDDMILRNLLLQNETNNIKNCKKQ.

ANK repeat units follow at residues 6–35 (KDDILICEAIENYDSESLRNILENGADPNV), 39–68 (YQYSHLHNAIEKKNGSAVSLLLKHGADPNI), 71–100 (FFTPPLHKAIKKGCVDIARSLLEYGAIVNL), 103–132 (YCLKPIHIAANRTESKIVKLLIEYGADINS), 137–169 (NGKYPIHYAMKVYDPFRLKIIKVLLDHGADINK), 174–202 (TNTSPLYETRFITDDLLDYIISRGANINI), 206–238 (MGRNILHEIILRNGYNDFSNILVLIDHGADINA), and 242–271 (EGNTPFMLHTINNNAIILANYIVSLYYLSY).

In Fowlpox virus (strain NVSL) (FPV), this protein is Putative ankyrin repeat protein FPV234.